The sequence spans 202 residues: Osteoclast-stimulating factor 1 (202 aa).

Residues 12–71 (GQVKVFRALYTFEPRTPDELYFEEGDIIYISDMSDTNWWKGTCKGRTGLIPSNYVAEQAE) enclose the SH3 domain. ANK repeat units lie at residues 72-101 (SIDNPLHEAAKRGNLSWLRECLDNQVGVNG), 105-135 (AGNTALYWACHGGHKDIVDVLFTQANLELNQ), and 139-168 (LGDTALHAAAWKGYADIVEMLLAKGARTDL).

The protein resides in the cytoplasm. In terms of biological role, induces bone resorption, acting probably through a signaling cascade which results in the secretion of factor(s) enhancing osteoclast formation and activity. This Gallus gallus (Chicken) protein is Osteoclast-stimulating factor 1 (OSTF1).